Reading from the N-terminus, the 560-residue chain is Proteasome-associated ATPase (560 aa).

Over residues 1–19 the composition is skewed to basic and acidic residues; the sequence is MSQQHDDRRPPDTADRDLA. Residues 1 to 21 form a disordered region; sequence MSQQHDDRRPPDTADRDLARQ. Residues 16-55 adopt a coiled-coil conformation; sequence RDLARQATSLAEKNERLTAALTAARAQLVEMKAQLEEVSK. 237–242 lines the ATP pocket; the sequence is GCGKTL. The docks into pockets in the proteasome alpha-ring stretch occupies residues 559-560; sequence YL.

It belongs to the AAA ATPase family. As to quaternary structure, homohexamer. Assembles into a hexameric ring structure that caps the 20S proteasome core. Strongly interacts with the prokaryotic ubiquitin-like protein Pup through a hydrophobic interface; the interacting region of ARC lies in its N-terminal coiled-coil domain. There is one Pup binding site per ARC hexamer ring. Upon ATP-binding, the C-terminus of ARC interacts with the alpha-rings of the proteasome core, possibly by binding to the intersubunit pockets.

The protein operates within protein degradation; proteasomal Pup-dependent pathway. In terms of biological role, ATPase which is responsible for recognizing, binding, unfolding and translocation of pupylated proteins into the bacterial 20S proteasome core particle. May be essential for opening the gate of the 20S proteasome via an interaction with its C-terminus, thereby allowing substrate entry and access to the site of proteolysis. Thus, the C-termini of the proteasomal ATPase may function like a 'key in a lock' to induce gate opening and therefore regulate proteolysis. The sequence is that of Proteasome-associated ATPase from Beutenbergia cavernae (strain ATCC BAA-8 / DSM 12333 / CCUG 43141 / JCM 11478 / NBRC 16432 / NCIMB 13614 / HKI 0122).